Consider the following 300-residue polypeptide: Zinc finger protein RME1 (300 aa).

Over residues 80-90 the composition is skewed to polar residues; the sequence is QAYDSTSSTEE. The segment at 80–100 is disordered; the sequence is QAYDSTSSTEEGTAPQLRPDE. 3 C2H2-type zinc fingers span residues 178–199, 206–234, and 256–281; these read YHCSHCSEKFATLVEFAAHLDE, CKCPIEQCPWKILGFQQATGLRRHCASQH, and LNCPFPICQKTFRRKDAYKRHVAMVH.

Its subcellular location is the nucleus. Involved in the control of meiosis. Represses the transcription of the IME1 gene thereby inhibiting cells from entering meiosis. But also activates the CLN2 gene thus promoting mitosis. This is Zinc finger protein RME1 (RME1) from Saccharomyces cerevisiae (strain ATCC 204508 / S288c) (Baker's yeast).